The following is a 79-amino-acid chain: Translation initiation factor IF-1, chloroplastic (79 aa).

The region spanning 1–74 (MTRKNIDLIE…HRGRITFRLR (74 aa)) is the S1-like domain.

It belongs to the IF-1 family. Component of the 30S ribosomal translation pre-initiation complex which assembles on the 30S ribosome in the order IF-2 and IF-3, IF-1 and N-formylmethionyl-tRNA(fMet); mRNA recruitment can occur at any time during PIC assembly.

The protein resides in the plastid. The protein localises to the chloroplast. Its function is as follows. One of the essential components for the initiation of protein synthesis. Stabilizes the binding of IF-2 and IF-3 on the 30S subunit to which N-formylmethionyl-tRNA(fMet) subsequently binds. Helps modulate mRNA selection, yielding the 30S pre-initiation complex (PIC). Upon addition of the 50S ribosomal subunit IF-1, IF-2 and IF-3 are released leaving the mature 70S translation initiation complex. This chain is Translation initiation factor IF-1, chloroplastic, found in Chlorella vulgaris (Green alga).